The chain runs to 442 residues: tRNA modification GTPase MnmE (442 aa).

Positions 24, 84, and 124 each coordinate (6S)-5-formyl-5,6,7,8-tetrahydrofolate. Residues 218 to 366 (GARVALFGPV…LRDDMLGRLW (149 aa)) form the TrmE-type G domain. Residues 228-233 (NAGKST), 247-253 (DDEPGTT), and 272-275 (DTAG) contribute to the GTP site. 2 residues coordinate Mg(2+): serine 232 and threonine 253. Lysine 442 is a (6S)-5-formyl-5,6,7,8-tetrahydrofolate binding site.

The protein belongs to the TRAFAC class TrmE-Era-EngA-EngB-Septin-like GTPase superfamily. TrmE GTPase family. In terms of assembly, homodimer. Heterotetramer of two MnmE and two MnmG subunits. K(+) is required as a cofactor.

The protein localises to the cytoplasm. Its function is as follows. Exhibits a very high intrinsic GTPase hydrolysis rate. Involved in the addition of a carboxymethylaminomethyl (cmnm) group at the wobble position (U34) of certain tRNAs, forming tRNA-cmnm(5)s(2)U34. This Myxococcus xanthus (strain DK1622) protein is tRNA modification GTPase MnmE.